Reading from the N-terminus, the 562-residue chain is Arginine--tRNA ligase (562 aa).

Positions 129-139 match the 'HIGH' region motif; the sequence is ANPTGPLHVGH.

This sequence belongs to the class-I aminoacyl-tRNA synthetase family. As to quaternary structure, monomer.

It localises to the cytoplasm. It carries out the reaction tRNA(Arg) + L-arginine + ATP = L-arginyl-tRNA(Arg) + AMP + diphosphate. This chain is Arginine--tRNA ligase, found in Xanthomonas oryzae pv. oryzae (strain KACC10331 / KXO85).